The primary structure comprises 501 residues: Ribose import ATP-binding protein RbsA (501 aa).

ABC transporter domains lie at 5 to 241 (LELK…VGRK) and 249 to 495 (LNLP…VGKQ). 37–44 (GENGAGKS) provides a ligand contact to ATP.

The protein belongs to the ABC transporter superfamily. Ribose importer (TC 3.A.1.2.1) family. As to quaternary structure, the complex is composed of an ATP-binding protein (RbsA), two transmembrane proteins (RbsC) and a solute-binding protein (RbsB).

It is found in the cell inner membrane. It carries out the reaction D-ribose(out) + ATP + H2O = D-ribose(in) + ADP + phosphate + H(+). Its function is as follows. Part of the ABC transporter complex RbsABC involved in ribose import. Responsible for energy coupling to the transport system. The chain is Ribose import ATP-binding protein RbsA from Photorhabdus laumondii subsp. laumondii (strain DSM 15139 / CIP 105565 / TT01) (Photorhabdus luminescens subsp. laumondii).